The sequence spans 504 residues: Crh-like protein CRH12 (504 aa).

The N-terminal stretch at 1 to 18 is a signal peptide; that stretch reads MYKQILTFLILFLRYILS. Positions 19–270 constitute a GH16 domain; it reads EFPDDPYEDD…YSKALTYSYG (252 aa). Residue asparagine 34 is glycosylated (N-linked (GlcNAc...) asparagine). An intrachain disulfide couples cysteine 43 to cysteine 51. Glutamate 138 functions as the Nucleophile in the catalytic mechanism. Catalysis depends on glutamate 143, which acts as the Proton donor. Residue glutamate 143 coordinates chitin. Asparagine 161 is a glycosylation site (N-linked (GlcNAc...) asparagine). Chitin contacts are provided by lysine 221, tryptophan 225, and threonine 234. A disordered region spans residues 304–404; it reads KPTPKQETDD…LDISTQLPPL (101 aa). Over residues 316–329 the composition is skewed to polar residues; that stretch reads VLTSSKSQRVATTI. Acidic residues predominate over residues 356-378; it reads WETEQDETGTDDTENSDNEEEES. N-linked (GlcNAc...) asparagine glycans are attached at residues asparagine 407, asparagine 416, and asparagine 425. Glycine 479 carries the GPI-anchor amidated glycine lipid modification. Positions 480–504 are cleaved as a propeptide — removed in mature form; that stretch reads VSSILATSFSSVVIAEILVIVVLLL.

This sequence belongs to the glycosyl hydrolase 16 family. CRH1 subfamily. In terms of processing, the GPI-anchor is attached to the protein in the endoplasmic reticulum and serves to target the protein to the cell surface. There, the glucosamine-inositol phospholipid moiety is cleaved off and the GPI-modified mannoprotein is covalently attached via its lipidless GPI glycan remnant to the 1,6-beta-glucan of the outer cell wall layer.

It localises to the secreted. It is found in the cell wall. Its subcellular location is the membrane. It catalyses the reaction Random endo-hydrolysis of N-acetyl-beta-D-glucosaminide (1-&gt;4)-beta-linkages in chitin and chitodextrins.. Functionally, dual chitinase/transglycosylase that plays a role in cell wall architecture. Chitinase and transglycosylase activities are coupled. Required for the polysaccharide cross-linking at the septa and the cell wall. More specifically, transfers chitin to 1,6-beta-glucan in the cell wall. Plays an important role in fungal pathogenesis via its functions in cell wall assembly and regeneration, filamentation, and adherence to host cells. In Candida albicans (strain SC5314 / ATCC MYA-2876) (Yeast), this protein is Crh-like protein CRH12 (CRH12).